We begin with the raw amino-acid sequence, 331 residues long: Ubiquinone biosynthesis protein UbiU (331 aa).

Residues Cys-169, Cys-176, Cys-193, and Cys-232 each coordinate [4Fe-4S] cluster.

Belongs to the peptidase U32 family. UbiU subfamily. As to quaternary structure, forms a heterodimer with UbiV. It depends on [4Fe-4S] cluster as a cofactor.

It functions in the pathway cofactor biosynthesis; ubiquinone biosynthesis. Its function is as follows. Required for O(2)-independent ubiquinone (coenzyme Q) biosynthesis. Together with UbiV, is essential for the C6-hydroxylation reaction in the oxygen-independent ubiquinone biosynthesis pathway. The chain is Ubiquinone biosynthesis protein UbiU from Escherichia coli (strain K12).